We begin with the raw amino-acid sequence, 154 residues long: uncharacterized protein (154 aa).

The next 2 helical transmembrane spans lie at 54-74 (FLIT…IYLL) and 81-101 (FAFV…FFLS).

It is found in the cell membrane. This is an uncharacterized protein from Mycoplasma genitalium (strain ATCC 33530 / DSM 19775 / NCTC 10195 / G37) (Mycoplasmoides genitalium).